The following is a 94-amino-acid chain: MKNQEESGWQAFLTLCSKMQKEKFLQDLFSLFLSFSERKDVASRYHIIRALLEGELTQREIAEKYGVSIAQITRGSNALKGLDPQFKEFLQKEI.

A DNA-binding region spans residues 58-81 (QREIAEKYGVSIAQITRGSNALKG).

This sequence belongs to the TrpR family. As to quaternary structure, homodimer.

The protein resides in the cytoplasm. Functionally, this protein is an aporepressor. When complexed with L-tryptophan it binds the operator region of the trp operon and prevents the initiation of transcription. This chain is Trp operon repressor homolog, found in Chlamydia trachomatis serovar A (strain ATCC VR-571B / DSM 19440 / HAR-13).